The chain runs to 62 residues: Alpha-toxin Tf4 (62 aa).

An LCN-type CS-alpha/beta domain is found at K2–C62. Disulfide bonds link C12–C62, C16–C38, C24–C43, and C28–C45. C62 bears the Cysteine amide mark.

As to expression, expressed by the venom gland.

The protein localises to the secreted. In terms of biological role, alpha toxins bind voltage-independently at site-3 of sodium channels (Nav) and inhibit the inactivation of the activated channels, thereby blocking neuronal transmission. This toxin is toxic to frogs but non-toxic to insect larvae (T.molitor), mammals (rats) and crustaceans (crabs) at the doses assayed. The protein is Alpha-toxin Tf4 of Tityus fasciolatus (Central Brazilian scorpion).